We begin with the raw amino-acid sequence, 193 residues long: DNA damage-inducible transcript 4-like protein (193 aa).

This sequence belongs to the DDIT4 family. As to expression, up-regulated in atherosclerotic plaques relative to healthy segments of the same artery.

Its subcellular location is the cytoplasm. Its function is as follows. Inhibits cell growth by regulating the TOR signaling pathway upstream of the TSC1-TSC2 complex and downstream of AKT1. This is DNA damage-inducible transcript 4-like protein (DDIT4L) from Homo sapiens (Human).